Here is a 201-residue protein sequence, read N- to C-terminus: 3-isopropylmalate dehydratase small subunit (201 aa).

It belongs to the LeuD family. LeuD type 1 subfamily. As to quaternary structure, heterodimer of LeuC and LeuD.

It catalyses the reaction (2R,3S)-3-isopropylmalate = (2S)-2-isopropylmalate. It participates in amino-acid biosynthesis; L-leucine biosynthesis; L-leucine from 3-methyl-2-oxobutanoate: step 2/4. Catalyzes the isomerization between 2-isopropylmalate and 3-isopropylmalate, via the formation of 2-isopropylmaleate. This Shewanella oneidensis (strain ATCC 700550 / JCM 31522 / CIP 106686 / LMG 19005 / NCIMB 14063 / MR-1) protein is 3-isopropylmalate dehydratase small subunit.